We begin with the raw amino-acid sequence, 319 residues long: tRNA uridine(34) hydroxylase (319 aa).

One can recognise a Rhodanese domain in the interval Lys127 to Glu221. The active-site Cysteine persulfide intermediate is the Cys181.

This sequence belongs to the TrhO family.

It catalyses the reaction uridine(34) in tRNA + AH2 + O2 = 5-hydroxyuridine(34) in tRNA + A + H2O. Its function is as follows. Catalyzes oxygen-dependent 5-hydroxyuridine (ho5U) modification at position 34 in tRNAs. The polypeptide is tRNA uridine(34) hydroxylase (Bacillus cereus (strain Q1)).